The chain runs to 139 residues: MRIIGLDVGSKTVGVAVSDPLGFTAQGLEIIPINEAKGEFGFDRLADLVKDYKVEKFVVGLPKNMNNTSGPRVEASQAYGKKIKELFDLPVEYQDERLTTVQAERMLVEQADVSRGKRKKVIDKLAAQLILQNYLDRMF.

This sequence belongs to the YqgF nuclease family.

It localises to the cytoplasm. Could be a nuclease involved in processing of the 5'-end of pre-16S rRNA. The chain is Putative pre-16S rRNA nuclease from Streptococcus mutans serotype c (strain ATCC 700610 / UA159).